Reading from the N-terminus, the 207-residue chain is SPRY domain-containing protein 4 (207 aa).

Positions 12–207 (YRWGTKRWGV…HSGLEVPKGL (196 aa)) constitute a B30.2/SPRY domain. Lys-53 and Lys-130 each carry N6-acetyllysine. Residue Lys-139 is modified to N6-succinyllysine.

This Rattus norvegicus (Rat) protein is SPRY domain-containing protein 4 (Spryd4).